Here is a 1375-residue protein sequence, read N- to C-terminus: ARF guanine-nucleotide exchange factor GNL2 (1375 aa).

Residues histidine 486 to asparagine 676 enclose the SEC7 domain. Glutamate 590 is an active-site residue.

As to quaternary structure, homodimer. Preferentially expressed in mature pollen grains and growing pollen tubes.

Its subcellular location is the cytoplasm. The protein resides in the cytosol. The protein localises to the membrane. Functionally, activates the ARF proteins by exchanging bound GDP for free GTP. Plays a role in vesicular protein sorting. Essential for pollen germination. The chain is ARF guanine-nucleotide exchange factor GNL2 (GNL2) from Arabidopsis thaliana (Mouse-ear cress).